The sequence spans 367 residues: Flagellar P-ring protein (367 aa).

A signal peptide spans 1–21; sequence MYVFKALAGIVLALVATLAHA.

Belongs to the FlgI family. In terms of assembly, the basal body constitutes a major portion of the flagellar organelle and consists of four rings (L,P,S, and M) mounted on a central rod.

It localises to the periplasm. The protein resides in the bacterial flagellum basal body. Functionally, assembles around the rod to form the L-ring and probably protects the motor/basal body from shearing forces during rotation. This chain is Flagellar P-ring protein, found in Salmonella choleraesuis (strain SC-B67).